The following is a 1121-amino-acid chain: MFIVYYSNQLEKQKEILSSLFKSLPPEDPFQQDIILVQSPNMAQWLQIELAKETGISANLKFPMPASFIWQLYAQNLPATALENPFDKDSMMWRLMRLIPIFLEKENFSPLRNYLSSSPHSEQYKLYQLSSKIADLFDQYLVYRPEWIFAWEKGEDEQITDQIQKQQPNLNATLFAQIQGNTKWQGELWRALVVDVKSDVNEATHRAALHNQFLALLADKKAPKKLPSRIFIFGIPALPTAYLNILQAISSEVDIHLFFNNPCQEYWGDISDLRLDYLRSRQRYQFNKQDENQPLFSEDQLSQLENAQFDVTYQKENLQLGNPLLAAWGKMGRDFLYILVRDEEHIPTYPVNAYQEIESNSLLGQLQSQILHLENKPLNIAKNDRTLTLHSCHSAMREVEVLHDYLLDLFNQDPSLTPKDVVVMVADINQYTPYIQAVFGQKNGDVPQIPFSLSDNKLSESDVLVSSYLTLLRLKESNFSAEDVLVLLDIPAMRERFNISLADLPLVREWVTDSGIRFGLQKNQDGINFNSWQAGLERMILGYAMREEQGIWQDSLGLNSSYGLKGELAGNLSHFFTALSALHETLQQAHSIEKWQEILTALLSDFFVRNEDTSDMIFYIQEKINELAEHLKTLHFNEELQAEVIADVITMQLEDAPNSLKFLAGKVNFCTLLPMRSVPFKVVCLLGMNDADYPRTQTPNSFDLMQYHYQKGDRVRRDDDRYLFLEALLAARDYCYISYVGRSITDNQPKEPSVLVSQLLDYINQGQKENVLTVIEHPMTAFSPDNFKNNEKFTRSFATKWLPIAQFDASSNNSEFAVTMTENLEKIEEVELDALVSFVENPVKFFFEKQLGVYFRDKDERIADSENFTLSGLDNYSLNNDLIYLDEQNFADYFRQAEVKGVLPRAEFGKVYAENIRDNVLEFKKKIADLGEAKHASVDFNLSVDWQNENQKIRLFGYMDALFGDDSQVIHWHFAKYKDRYCIRPWIYYLIQCVTQENAVPAKLITQDKVLELPPIEREVALAQLQIYVKDYLQSQIEIQLVPTVRNISDFIVSDENSVSEKLQELTESNGFGPKADPYWSRVLAQTSRFKQPENIAKLLKQTKAWFGLLFAQKKTRKTQS.

Belongs to the RecC family. As to quaternary structure, heterotrimer of RecB, RecC and RecD. All subunits contribute to DNA-binding.

In terms of biological role, a helicase/nuclease that prepares dsDNA breaks (DSB) for recombinational DNA repair. Binds to DSBs and unwinds DNA via a highly rapid and processive ATP-dependent bidirectional helicase activity. Unwinds dsDNA until it encounters a Chi (crossover hotspot instigator) sequence from the 3' direction. Cuts ssDNA a few nucleotides 3' to the Chi site. The properties and activities of the enzyme are changed at Chi. The Chi-altered holoenzyme produces a long 3'-ssDNA overhang and facilitates RecA-binding to the ssDNA for homologous DNA recombination and repair. Holoenzyme degrades any linearized DNA that is unable to undergo homologous recombination. In the holoenzyme this subunit recognizes the wild-type Chi sequence, and when added to isolated RecB increases its ATP-dependent helicase processivity. The chain is RecBCD enzyme subunit RecC from Haemophilus influenzae (strain ATCC 51907 / DSM 11121 / KW20 / Rd).